The primary structure comprises 159 residues: MSTTVTLTSSDGVDLTVDRDVAERSVLIKNMLEDLGESGEAIPIPNVNEVVLKKVIEWCTHHKNDPPSTGDDDDSRRKTTDIDEWDQKFMQVDQEMLFEIILAANYLDIKALLDVGCKTVANMIKGKSPEEIRKTFNIQNDFTPEEEDQIRRENEWAEE.

The interval 101–159 is interaction with the F-box domain of F-box proteins; sequence ILAANYLDIKALLDVGCKTVANMIKGKSPEEIRKTFNIQNDFTPEEEDQIRRENEWAEE.

Belongs to the SKP1 family. In terms of assembly, component of the SCF (SKP1-CUL1-F-box protein) E3 ubiquitin ligase complexes.

The protein operates within protein modification; protein ubiquitination. Its function is as follows. Essential component of the SCF (SKP1-CUL1-F-box protein) E3 ubiquitin ligase complexes, which mediate the ubiquitination and subsequent proteasomal degradation of target proteins. Controls sulfur metabolite repression, probably by mediating the inactivation or degradation of the metR transcription factor. In Aspergillus clavatus (strain ATCC 1007 / CBS 513.65 / DSM 816 / NCTC 3887 / NRRL 1 / QM 1276 / 107), this protein is E3 ubiquitin ligase complex SCF subunit sconC (sconC).